The following is an 89-amino-acid chain: Small ribosomal subunit protein bS20 (89 aa).

Belongs to the bacterial ribosomal protein bS20 family.

Functionally, binds directly to 16S ribosomal RNA. In Helicobacter pylori (strain Shi470), this protein is Small ribosomal subunit protein bS20.